Reading from the N-terminus, the 545-residue chain is CTP synthase (545 aa).

Residues 1-266 (MTTKYIFVTG…DEICVKRFGL (266 aa)) are amidoligase domain. CTP is bound at residue Ser-14. UTP is bound at residue Ser-14. ATP-binding positions include 15 to 20 (SLGKGI) and Asp-72. Residues Asp-72 and Glu-140 each contribute to the Mg(2+) site. CTP-binding positions include 147–149 (DIE), 187–192 (KTKPTQ), and Lys-223. Residues 187–192 (KTKPTQ) and Lys-223 each bind UTP. 239 to 241 (RDV) is an ATP binding site. The 252-residue stretch at 291–542 (IIGMVGKYTE…IKSAIDHQQG (252 aa)) folds into the Glutamine amidotransferase type-1 domain. Gly-352 provides a ligand contact to L-glutamine. Residue Cys-379 is the Nucleophile; for glutamine hydrolysis of the active site. L-glutamine is bound by residues 380 to 383 (LGMQ), Glu-403, and Arg-470. Catalysis depends on residues His-515 and Glu-517.

This sequence belongs to the CTP synthase family. In terms of assembly, homotetramer.

It catalyses the reaction UTP + L-glutamine + ATP + H2O = CTP + L-glutamate + ADP + phosphate + 2 H(+). The enzyme catalyses L-glutamine + H2O = L-glutamate + NH4(+). It carries out the reaction UTP + NH4(+) + ATP = CTP + ADP + phosphate + 2 H(+). It functions in the pathway pyrimidine metabolism; CTP biosynthesis via de novo pathway; CTP from UDP: step 2/2. Its activity is regulated as follows. Allosterically activated by GTP, when glutamine is the substrate; GTP has no effect on the reaction when ammonia is the substrate. The allosteric effector GTP functions by stabilizing the protein conformation that binds the tetrahedral intermediate(s) formed during glutamine hydrolysis. Inhibited by the product CTP, via allosteric rather than competitive inhibition. In terms of biological role, catalyzes the ATP-dependent amination of UTP to CTP with either L-glutamine or ammonia as the source of nitrogen. Regulates intracellular CTP levels through interactions with the four ribonucleotide triphosphates. The chain is CTP synthase from Psychromonas ingrahamii (strain DSM 17664 / CCUG 51855 / 37).